A 314-amino-acid polypeptide reads, in one-letter code: tRNA dimethylallyltransferase (314 aa).

8–15 (GPTGAGKS) is a binding site for ATP. Residue 10 to 15 (TGAGKS) coordinates substrate.

It belongs to the IPP transferase family. In terms of assembly, monomer. Mg(2+) serves as cofactor.

The enzyme catalyses adenosine(37) in tRNA + dimethylallyl diphosphate = N(6)-dimethylallyladenosine(37) in tRNA + diphosphate. In terms of biological role, catalyzes the transfer of a dimethylallyl group onto the adenine at position 37 in tRNAs that read codons beginning with uridine, leading to the formation of N6-(dimethylallyl)adenosine (i(6)A). The chain is tRNA dimethylallyltransferase from Mycobacterium tuberculosis (strain ATCC 25177 / H37Ra).